A 606-amino-acid polypeptide reads, in one-letter code: Phosphomethylpyrimidine synthase (606 aa).

The span at 1 to 13 (MTTADARTPASKQ) shows a compositional bias: polar residues. 2 disordered regions span residues 1 to 49 (MTTA…SRPD) and 105 to 147 (AGRP…DGRP). The segment covering 14 to 31 (NDGTPDGTTPDAGTPNDG) has biased composition (low complexity). The segment covering 105 to 117 (AGRPVRPEDDGLK) has biased composition (basic and acidic residues). Residues asparagine 213, methionine 242, tyrosine 271, histidine 307, 327 to 329 (SRG), 368 to 371 (DGLR), and glutamate 407 contribute to the substrate site. Histidine 411 contacts Zn(2+). Tyrosine 434 lines the substrate pocket. Residue histidine 475 participates in Zn(2+) binding. Cysteine 555, cysteine 558, and cysteine 563 together coordinate [4Fe-4S] cluster.

Belongs to the ThiC family. The cofactor is [4Fe-4S] cluster.

The enzyme catalyses 5-amino-1-(5-phospho-beta-D-ribosyl)imidazole + S-adenosyl-L-methionine = 4-amino-2-methyl-5-(phosphooxymethyl)pyrimidine + CO + 5'-deoxyadenosine + formate + L-methionine + 3 H(+). It participates in cofactor biosynthesis; thiamine diphosphate biosynthesis. Its function is as follows. Catalyzes the synthesis of the hydroxymethylpyrimidine phosphate (HMP-P) moiety of thiamine from aminoimidazole ribotide (AIR) in a radical S-adenosyl-L-methionine (SAM)-dependent reaction. The polypeptide is Phosphomethylpyrimidine synthase (Streptomyces griseus subsp. griseus (strain JCM 4626 / CBS 651.72 / NBRC 13350 / KCC S-0626 / ISP 5235)).